The primary structure comprises 550 residues: Glutamyl-tRNA(Gln) amidotransferase subunit A, mitochondrial (550 aa).

Active-site charge relay system residues include Lys79 and Ser171. Catalysis depends on Ser195, which acts as the Acyl-ester intermediate. The segment at 371 to 390 is disordered; it reads EKDENKVDNDNDDDDDVDEN.

It belongs to the amidase family. GatA subfamily. In terms of assembly, subunit of the heterotrimeric GatCAB amidotransferase (AdT) complex, composed of A, B and C subunits.

The protein localises to the mitochondrion. The catalysed reaction is L-glutamyl-tRNA(Gln) + L-glutamine + ATP + H2O = L-glutaminyl-tRNA(Gln) + L-glutamate + ADP + phosphate + H(+). Its function is as follows. Allows the formation of correctly charged Gln-tRNA(Gln) through the transamidation of misacylated Glu-tRNA(Gln) in the mitochondria. The reaction takes place in the presence of glutamine and ATP through an activated gamma-phospho-Glu-tRNA(Gln). The chain is Glutamyl-tRNA(Gln) amidotransferase subunit A, mitochondrial from Dictyostelium discoideum (Social amoeba).